We begin with the raw amino-acid sequence, 1040 residues long: Isoleucine--tRNA ligase (1040 aa).

The 'HIGH' region motif lies at 47 to 57; sequence PYCSGSIHLGT. The 'KMSKS' region motif lies at 605–609; the sequence is KMSKS. Lys608 contacts ATP.

The protein belongs to the class-I aminoacyl-tRNA synthetase family. IleS type 2 subfamily. In terms of assembly, monomer. Zn(2+) serves as cofactor.

It localises to the cytoplasm. The enzyme catalyses tRNA(Ile) + L-isoleucine + ATP = L-isoleucyl-tRNA(Ile) + AMP + diphosphate. In terms of biological role, catalyzes the attachment of isoleucine to tRNA(Ile). As IleRS can inadvertently accommodate and process structurally similar amino acids such as valine, to avoid such errors it has two additional distinct tRNA(Ile)-dependent editing activities. One activity is designated as 'pretransfer' editing and involves the hydrolysis of activated Val-AMP. The other activity is designated 'posttransfer' editing and involves deacylation of mischarged Val-tRNA(Ile). This chain is Isoleucine--tRNA ligase, found in Methanococcus aeolicus (strain ATCC BAA-1280 / DSM 17508 / OCM 812 / Nankai-3).